The sequence spans 302 residues: Beta-lactamase (302 aa).

The span at 1–11 (MADRRRVHAWA) shows a compositional bias: basic residues. The first 29 residues, 1-29 (MADRRRVHAWARARPAAPEPAPPTPSAAA), serve as a signal peptide directing secretion. The tract at residues 1–43 (MADRRRVHAWARARPAAPEPAPPTPSAAAPSVAPGPAATPPDP) is disordered. Low complexity predominate over residues 26 to 36 (SAAAPSVAPGP). Ser85 acts as the Acyl-ester intermediate in catalysis. A substrate-binding site is contributed by Ser143. The Proton acceptor role is filled by Glu179. 247–249 (KTG) provides a ligand contact to substrate.

Belongs to the class-A beta-lactamase family.

It localises to the secreted. It catalyses the reaction a beta-lactam + H2O = a substituted beta-amino acid. Its function is as follows. Active on penicillins but not on cephalosporins. The protein is Beta-lactamase (bla) of Amycolatopsis lactamdurans (Nocardia lactamdurans).